Consider the following 336-residue polypeptide: MFLKFCVVAFAICLSINLSEGAPSSETIYKFAIIADLDRKSISQKNDNNYKSIVKIGQLNQVGRKFNFAMENKDHEIFTKYAYKGRGAELSEFLVYKWKLYTFDDKSGIVFKLKNNADLVPWVILANGNGDQVDGFKAEWATTKGDKMYVGSTGISWSDSTGKLNSNSLWIKEINQDGKVLSSNWKEYYDKMKSAMNMPKGFIWHEAVNWSKKKNQWVLLPRKCSELPFDTETEETIGCNKIIIASENFQKINSIDIKGTPFDPAAGFSSFKFLPDSDDQILIALKTIEKNGKTATYLTVIDITGKVLMSDKIVNKDKFEGIVLLKSTEGFLKRKE.

The N-terminal stretch at 1-21 (MFLKFCVVAFAICLSINLSEG) is a signal peptide. Residue asparagine 209 is glycosylated (N-linked (GlcNAc...) asparagine).

Belongs to the apyrase family. Ca(2+) is required as a cofactor. Salivary gland (at protein level).

It localises to the secreted. It catalyses the reaction a ribonucleoside 5'-triphosphate + 2 H2O = a ribonucleoside 5'-phosphate + 2 phosphate + 2 H(+). Functionally, facilitates hematophagy by inhibiting ADP- and collagen-dependent platelet aggregation in the host. Cleaves adenosine triphosphate (ATP) and adenosine diphosphate (ADP) to adenosine monophosphate (AMP) and inorganic phosphate in calcium-dependent manner. In Phlebotomus duboscqi (Sandfly), this protein is Apyrase.